Consider the following 50-residue polypeptide: Small integral membrane protein 46 (50 aa).

A helical membrane pass occupies residues 15-37; the sequence is TTFQLWLQLLLWAHLAVRFLGYL.

The protein localises to the membrane. The chain is Small integral membrane protein 46 from Homo sapiens (Human).